Here is a 630-residue protein sequence, read N- to C-terminus: 1-deoxy-D-xylulose-5-phosphate synthase (630 aa).

Thiamine diphosphate contacts are provided by residues H72 and 113-115; that span reads GHS. D144 provides a ligand contact to Mg(2+). Thiamine diphosphate-binding positions include 145 to 146, N173, Y284, and E367; that span reads GA. N173 lines the Mg(2+) pocket.

It belongs to the transketolase family. DXPS subfamily. Homodimer. It depends on Mg(2+) as a cofactor. Thiamine diphosphate serves as cofactor.

It catalyses the reaction D-glyceraldehyde 3-phosphate + pyruvate + H(+) = 1-deoxy-D-xylulose 5-phosphate + CO2. The protein operates within metabolic intermediate biosynthesis; 1-deoxy-D-xylulose 5-phosphate biosynthesis; 1-deoxy-D-xylulose 5-phosphate from D-glyceraldehyde 3-phosphate and pyruvate: step 1/1. In terms of biological role, catalyzes the acyloin condensation reaction between C atoms 2 and 3 of pyruvate and glyceraldehyde 3-phosphate to yield 1-deoxy-D-xylulose-5-phosphate (DXP). The chain is 1-deoxy-D-xylulose-5-phosphate synthase from Bacillus cereus (strain ATCC 10987 / NRS 248).